Reading from the N-terminus, the 336-residue chain is MADFHEFYPLRRHNTFGFDVRARYASHIRSEADLLAALNDPRAVGLPLVVLGGGSNVVLTGDLDALVLLMEIPGFRVGTAPDAWLVTAGAGENWHGLVCRTIAEGLPGLENLALIPGTVGAAPIQNIGAYGVELRERFASVRALDRQTMRFVDLDLEQCAFSYRDSLFKQAGRDRYIITAVTLRLSRDWQPVLAYGELAREVEGNAAPDAAAIRDAVIAIRSRKLPDPAQIGNAGSFFKNPLVSAEQRDVLLASHPDLVSYAQPDGSFKLAAGWLIDRCGFKGLNDGPVGVYGKQALVLVHHGGGTGAALLALAGRIADTVQARFGVRIEPEPVVL.

The FAD-binding PCMH-type domain occupies 17–188 (GFDVRARYAS…TAVTLRLSRD (172 aa)). Arginine 164 is a catalytic residue. The active-site Proton donor is serine 236. Glutamate 332 is a catalytic residue.

The protein belongs to the MurB family. It depends on FAD as a cofactor.

The protein localises to the cytoplasm. It carries out the reaction UDP-N-acetyl-alpha-D-muramate + NADP(+) = UDP-N-acetyl-3-O-(1-carboxyvinyl)-alpha-D-glucosamine + NADPH + H(+). The protein operates within cell wall biogenesis; peptidoglycan biosynthesis. Cell wall formation. In Cupriavidus pinatubonensis (strain JMP 134 / LMG 1197) (Cupriavidus necator (strain JMP 134)), this protein is UDP-N-acetylenolpyruvoylglucosamine reductase.